The following is an 847-amino-acid chain: Beta-galactosidase 1 (847 aa).

Residues 1-32 (MGSKPNAMKNVVAMAAVSALFLLGFLVCSVSG) form the signal peptide. The Proton donor role is filled by Glu-190. Glu-259 acts as the Nucleophile in catalysis. Asn-469 carries an N-linked (GlcNAc...) asparagine glycan. The region spanning 761-847 (KPLHPKAHLQ…KKLAVEAVCA (87 aa)) is the SUEL-type lectin domain.

Belongs to the glycosyl hydrolase 35 family. Ubiquitous, at low levels.

It localises to the secreted. It is found in the extracellular space. Its subcellular location is the apoplast. The catalysed reaction is Hydrolysis of terminal non-reducing beta-D-galactose residues in beta-D-galactosides.. In Arabidopsis thaliana (Mouse-ear cress), this protein is Beta-galactosidase 1 (BGAL1).